Here is a 743-residue protein sequence, read N- to C-terminus: Conserved oligomeric Golgi complex subunit 8 (743 aa).

Disordered regions lie at residues 549–672 (EDGP…TEPE) and 704–743 (TQDD…KKDD). Basic and acidic residues-rich tracts occupy residues 563–581 (ESVK…HGTD), 594–621 (PVKE…HETP), 633–647 (SEAK…HLEL), and 654–664 (QEIREQEHKEV). Positions 704-726 (TQDDPIEEEEGWGWGDDDGEEQE) are enriched in acidic residues. Residues 727–743 (ISSKEVESPKEKCKKDD) show a composition bias toward basic and acidic residues.

Belongs to the COG8 family. In terms of assembly, component of the conserved oligomeric Golgi complex which is composed of eight different subunits and is required for normal Golgi morphology and localization.

It is found in the golgi apparatus membrane. Its function is as follows. Required for normal Golgi function. This chain is Conserved oligomeric Golgi complex subunit 8 (cogc-8), found in Caenorhabditis elegans.